The following is a 358-amino-acid chain: Photosystem II protein D1 2 (358 aa).

3 helical membrane-spanning segments follow: residues 28–45, 117–132, and 141–155; these read YVGW…AATI, HFLI…QWEL, and WICV…AAMA. His-117 lines the chlorophyll a pocket. Tyr-125 contacts pheophytin a. [CaMn4O5] cluster is bound by residues Asp-169 and Glu-188. A helical transmembrane segment spans residues 196-217; the sequence is FHMLGVAGVFGGSLFSAMHGSL. A chlorophyll a-binding site is contributed by His-197. A quinone contacts are provided by residues His-214 and 263–264; that span reads SF. His-214 serves as a coordination point for Fe cation. His-271 contacts Fe cation. A helical transmembrane segment spans residues 273-287; sequence FLGAWPVVGIWFTSM. 4 residues coordinate [CaMn4O5] cluster: His-331, Glu-332, Asp-341, and Ala-343. The propeptide occupies 344–358; that stretch reads AAESTPVALQAPAIG.

The protein belongs to the reaction center PufL/M/PsbA/D family. In terms of assembly, PSII is composed of 1 copy each of membrane proteins PsbA, PsbB, PsbC, PsbD, PsbE, PsbF, PsbH, PsbI, PsbJ, PsbK, PsbL, PsbM, PsbT, PsbX, PsbY, PsbZ, Psb30/Ycf12, peripheral proteins PsbO, CyanoQ (PsbQ), PsbU, PsbV and a large number of cofactors. It forms dimeric complexes. The cofactor is The D1/D2 heterodimer binds P680, chlorophylls that are the primary electron donor of PSII, and subsequent electron acceptors. It shares a non-heme iron and each subunit binds pheophytin, quinone, additional chlorophylls, carotenoids and lipids. D1 provides most of the ligands for the Mn4-Ca-O5 cluster of the oxygen-evolving complex (OEC). There is also a Cl(-1) ion associated with D1 and D2, which is required for oxygen evolution. The PSII complex binds additional chlorophylls, carotenoids and specific lipids.. In terms of processing, tyr-160 forms a radical intermediate that is referred to as redox-active TyrZ, YZ or Y-Z. Post-translationally, C-terminally processed by CtpA; processing is essential to allow assembly of the oxygen-evolving complex and thus photosynthetic growth.

It localises to the cellular thylakoid membrane. It carries out the reaction 2 a plastoquinone + 4 hnu + 2 H2O = 2 a plastoquinol + O2. In terms of biological role, photosystem II (PSII) is a light-driven water:plastoquinone oxidoreductase that uses light energy to abstract electrons from H(2)O, generating O(2) and a proton gradient subsequently used for ATP formation. It consists of a core antenna complex that captures photons, and an electron transfer chain that converts photonic excitation into a charge separation. The D1/D2 (PsbA/PsbD) reaction center heterodimer binds P680, the primary electron donor of PSII as well as several subsequent electron acceptors. The polypeptide is Photosystem II protein D1 2 (Synechococcus sp. (strain CC9605)).